Reading from the N-terminus, the 476-residue chain is Bifunctional protein HldE (476 aa).

The segment at 1–319 is ribokinase; the sequence is MKVSLPAFEK…EALALHHGES (319 aa). 195–198 is a binding site for ATP; sequence NMSE. The active site involves aspartate 264. The interval 345 to 476 is cytidylyltransferase; the sequence is MTNGCFDILH…AIIQNIMANQ (132 aa).

In the N-terminal section; belongs to the carbohydrate kinase PfkB family. This sequence in the C-terminal section; belongs to the cytidylyltransferase family. As to quaternary structure, homodimer.

It carries out the reaction D-glycero-beta-D-manno-heptose 7-phosphate + ATP = D-glycero-beta-D-manno-heptose 1,7-bisphosphate + ADP + H(+). The enzyme catalyses D-glycero-beta-D-manno-heptose 1-phosphate + ATP + H(+) = ADP-D-glycero-beta-D-manno-heptose + diphosphate. It participates in nucleotide-sugar biosynthesis; ADP-L-glycero-beta-D-manno-heptose biosynthesis; ADP-L-glycero-beta-D-manno-heptose from D-glycero-beta-D-manno-heptose 7-phosphate: step 1/4. The protein operates within nucleotide-sugar biosynthesis; ADP-L-glycero-beta-D-manno-heptose biosynthesis; ADP-L-glycero-beta-D-manno-heptose from D-glycero-beta-D-manno-heptose 7-phosphate: step 3/4. Functionally, catalyzes the phosphorylation of D-glycero-D-manno-heptose 7-phosphate at the C-1 position to selectively form D-glycero-beta-D-manno-heptose-1,7-bisphosphate. In terms of biological role, catalyzes the ADP transfer from ATP to D-glycero-beta-D-manno-heptose 1-phosphate, yielding ADP-D-glycero-beta-D-manno-heptose. The chain is Bifunctional protein HldE from Shewanella baltica (strain OS185).